The chain runs to 355 residues: UDP-N-acetylglucosamine--N-acetylmuramyl-(pentapeptide) pyrophosphoryl-undecaprenol N-acetylglucosamine transferase (355 aa).

UDP-N-acetyl-alpha-D-glucosamine contacts are provided by residues 15 to 17, N127, R163, S191, I244, 263 to 268, and Q288; these read TGG and ALTVSE.

Belongs to the glycosyltransferase 28 family. MurG subfamily.

Its subcellular location is the cell inner membrane. It carries out the reaction di-trans,octa-cis-undecaprenyl diphospho-N-acetyl-alpha-D-muramoyl-L-alanyl-D-glutamyl-meso-2,6-diaminopimeloyl-D-alanyl-D-alanine + UDP-N-acetyl-alpha-D-glucosamine = di-trans,octa-cis-undecaprenyl diphospho-[N-acetyl-alpha-D-glucosaminyl-(1-&gt;4)]-N-acetyl-alpha-D-muramoyl-L-alanyl-D-glutamyl-meso-2,6-diaminopimeloyl-D-alanyl-D-alanine + UDP + H(+). It participates in cell wall biogenesis; peptidoglycan biosynthesis. In terms of biological role, cell wall formation. Catalyzes the transfer of a GlcNAc subunit on undecaprenyl-pyrophosphoryl-MurNAc-pentapeptide (lipid intermediate I) to form undecaprenyl-pyrophosphoryl-MurNAc-(pentapeptide)GlcNAc (lipid intermediate II). This chain is UDP-N-acetylglucosamine--N-acetylmuramyl-(pentapeptide) pyrophosphoryl-undecaprenol N-acetylglucosamine transferase, found in Escherichia coli (strain K12 / MC4100 / BW2952).